Consider the following 160-residue polypeptide: Putative pre-16S rRNA nuclease (160 aa).

This sequence belongs to the YqgF nuclease family.

Its subcellular location is the cytoplasm. In terms of biological role, could be a nuclease involved in processing of the 5'-end of pre-16S rRNA. This is Putative pre-16S rRNA nuclease from Cereibacter sphaeroides (strain KD131 / KCTC 12085) (Rhodobacter sphaeroides).